Here is a 259-residue protein sequence, read N- to C-terminus: Eukaryotic translation initiation factor 3 subunit J (259 aa).

Positions 1–12 (MAAAAAAAAGDS) are enriched in low complexity. The sufficient for interaction with EIF3B stretch occupies residues 1 to 70 (MAAAAAAAAG…KEEAEVKPEV (70 aa)). Residues 1-111 (MAAAAAAAAG…EPEEPKVLTP (111 aa)) form a disordered region. Phosphoserine is present on residues Ser12, Ser14, and Ser21. Over residues 41-60 (EGEDEDEDVKDNWDDDDDEK) the composition is skewed to acidic residues. Over residues 61-107 (KEEAEVKPEVKISEKKKIAEKIKEKERQQKKRQEEIKKRLEEPEEPK) the composition is skewed to basic and acidic residues. The stretch at 71–136 (KISEKKKIAE…ESDLELAKET (66 aa)) forms a coiled coil. Lys107 participates in a covalent cross-link: Glycyl lysine isopeptide (Lys-Gly) (interchain with G-Cter in SUMO2). Thr110 is subject to Phosphothreonine. Ser128 is subject to Phosphoserine. Residues 218-247 (SKAKKKKKGVVPGGGLKATMKDDLADYGGY) are disordered. Residues 244–259 (YGGYDGGYVQDYEDFM) are promotes stable association with the 40S ribosome. Tyr255 carries the phosphotyrosine modification.

Belongs to the eIF-3 subunit J family. Component of the eukaryotic translation initiation factor 3 (eIF-3) complex, which is composed of 13 subunits: EIF3A, EIF3B, EIF3C, EIF3D, EIF3E, EIF3F, EIF3G, EIF3H, EIF3I, EIF3J, EIF3K, EIF3L and EIF3M. The eIF-3 complex appears to include 3 stable modules: module A is composed of EIF3A, EIF3B, EIF3G and EIF3I; module B is composed of EIF3F, EIF3H, and EIF3M; and module C is composed of EIF3C, EIF3D, EIF3E, EIF3K and EIF3L. EIF3C of module C binds EIF3B of module A and EIF3H of module B, thereby linking the three modules. EIF3J is a labile subunit that binds to the eIF-3 complex via EIF3B. The eIF-3 complex interacts with RPS6KB1 under conditions of nutrient depletion. Mitogenic stimulation leads to binding and activation of a complex composed of MTOR and RPTOR, leading to phosphorylation and release of RPS6KB1 and binding of EIF4B to eIF-3. Post-translationally, phosphorylated. Phosphorylation is enhanced upon serum stimulation.

The protein localises to the cytoplasm. Component of the eukaryotic translation initiation factor 3 (eIF-3) complex, which is required for several steps in the initiation of protein synthesis. The eIF-3 complex associates with the 40S ribosome and facilitates the recruitment of eIF-1, eIF-1A, eIF-2:GTP:methionyl-tRNAi and eIF-5 to form the 43S pre-initiation complex (43S PIC). The eIF-3 complex stimulates mRNA recruitment to the 43S PIC and scanning of the mRNA for AUG recognition. The eIF-3 complex is also required for disassembly and recycling of post-termination ribosomal complexes and subsequently prevents premature joining of the 40S and 60S ribosomal subunits prior to initiation. The eIF-3 complex specifically targets and initiates translation of a subset of mRNAs involved in cell proliferation, including cell cycling, differentiation and apoptosis, and uses different modes of RNA stem-loop binding to exert either translational activation or repression. This subunit binds directly within the mRNA entry channel of the 40S ribosome to the aminoacyl (A) site. It may regulate the interaction between the 43S PIC and mRNA. In Pongo abelii (Sumatran orangutan), this protein is Eukaryotic translation initiation factor 3 subunit J.